The following is a 400-amino-acid chain: MTETTPTTNETKEQVITPWEVEAAPGGSVDYMKLVDQFGSTVISEELIARFEKVTGKRAHHFLRRGIFFSHRDLKEILDHHESGKKWFLYTGRGPSSGSLHFGHLLPFTFTKYLQDAFNVPLVVQMTNDEKFLWKDMTLEESIKFTHNNVKDIIALGFDIQKTFIFSNLEYIHHLYPNVLKIARCVNLNQIQNIFGFKESDAIGKFTFPPVQAAPCFPDSFPHIFPLNDPEIKNIRCLIPCAIDQDPYFRMTRDIAHRIGHQKPALIHSKFFPALQGHNTKMSASDTNSAVYLSDTPDQVKDKIKKHAFSGGGATKEEQEKNGADLSVDITYEYLTFMLEDDEQLKDIAHRYSTGKMMTGEIKQILIDLMNKIIIRHKEARAKITDEVLSTFMSIRKLNF.

Residues 95–104 (PSSGSLHFGH) carry the 'HIGH' region motif. A 'KMSKS' region motif is present at residues 281–285 (KMSAS).

The protein belongs to the class-I aminoacyl-tRNA synthetase family.

It localises to the cytoplasm. It carries out the reaction tRNA(Trp) + L-tryptophan + ATP = L-tryptophyl-tRNA(Trp) + AMP + diphosphate + H(+). This is Tryptophan--tRNA ligase, cytoplasmic (trpS) from Dictyostelium discoideum (Social amoeba).